Here is a 390-residue protein sequence, read N- to C-terminus: tRNA-specific 2-thiouridylase MnmA (390 aa).

ATP contacts are provided by residues 29–36 (GLSGGVDS) and Leu55. Cys116 (nucleophile) is an active-site residue. An intrachain disulfide couples Cys116 to Cys225. Gly141 contributes to the ATP binding site. An interaction with tRNA region spans residues 175–177 (KDQ). The active-site Cysteine persulfide intermediate is the Cys225. The segment at 330–331 (RY) is interaction with tRNA.

The protein belongs to the MnmA/TRMU family.

The protein localises to the cytoplasm. It catalyses the reaction S-sulfanyl-L-cysteinyl-[protein] + uridine(34) in tRNA + AH2 + ATP = 2-thiouridine(34) in tRNA + L-cysteinyl-[protein] + A + AMP + diphosphate + H(+). Catalyzes the 2-thiolation of uridine at the wobble position (U34) of tRNA, leading to the formation of s(2)U34. The sequence is that of tRNA-specific 2-thiouridylase MnmA from Prochlorococcus marinus (strain MIT 9515).